An 88-amino-acid chain; its full sequence is Large ribosomal subunit protein eL37 (88 aa).

Positions 1 to 24 (MTKGTTSFGKRHNKSHTQCRRCGR) are disordered. Positions 9–24 (GKRHNKSHTQCRRCGR) are enriched in basic residues. Residues Cys-19, Cys-22, Cys-34, and Cys-37 each contribute to the Zn(2+) site. A C4-type zinc finger spans residues 19–37 (CRRCGRKSYHIQKKTCSSC).

It belongs to the eukaryotic ribosomal protein eL37 family. The cofactor is Zn(2+).

Its function is as follows. Binds to the 23S rRNA. The sequence is that of Large ribosomal subunit protein eL37 (RPL37) from Schistosoma mansoni (Blood fluke).